A 1723-amino-acid chain; its full sequence is Lymphocyte antigen 75 (1723 aa).

An N-terminal signal peptide occupies residues 1–27 (MRTGRVTPGLAAGLLLLLLRSFGLVEP). The Extracellular segment spans residues 28-1667 (SESSGNDPFT…AVCKIPLSPD (1640 aa)). Residues 33-182 (NDPFTIVHEN…FLIGETWYHD (150 aa)) enclose the Ricin B-type lectin domain. Asn-135 carries N-linked (GlcNAc...) asparagine glycosylation. The Fibronectin type-II domain maps to 164–211 (SYGRPCEFPFLIGETWYHDCIHDEDHSGPWCATTLSYEYDQKWGICLL). Intrachain disulfides connect Cys-169/Cys-194, Cys-183/Cys-209, Cys-247/Cys-340, and Cys-317/Cys-332. In terms of domain architecture, C-type lectin 1 spans 225–341 (QIGSCYQFNN…CESQQPYVCK (117 aa)). Residues Asn-345 and Asn-377 are each glycosylated (N-linked (GlcNAc...) asparagine). C-type lectin domains lie at 368 to 486 (NNGF…YVCK), 493 to 625 (KDAE…ICKK), and 652 to 791 (SSLS…WVCQ). Disulfide bonds link Cys-389-Cys-485 and Cys-462-Cys-477. A glycan (N-linked (GlcNAc...) asparagine) is linked at Asn-529. Intrachain disulfides connect Cys-597/Cys-614, Cys-678/Cys-790, and Cys-752/Cys-782. N-linked (GlcNAc...) asparagine glycans are attached at residues Asn-843 and Asn-865. A Phosphotyrosine modification is found at Tyr-934. 3 N-linked (GlcNAc...) asparagine glycosylation sites follow: Asn-935, Asn-1077, and Asn-1104. Residues 959 to 1092 (FQNKCFLKVN…ERHSLSLCQK (134 aa)) enclose the C-type lectin 5 domain. Cys-1061 and Cys-1081 are disulfide-bonded. The region spanning 1111 to 1223 (YLNNLYKIIS…DNQPGAICYY (113 aa)) is the C-type lectin 6 domain. The cysteines at positions 1198 and 1212 are disulfide-linked. Residues Asn-1226, Asn-1321, and Asn-1393 are each glycosylated (N-linked (GlcNAc...) asparagine). The 124-residue stretch at 1252 to 1375 (FQNSCYNFMI…VIEETLHFYQ (124 aa)) folds into the C-type lectin 7 domain. C-type lectin domains follow at residues 1402–1514 (YKDG…ICYK) and 1543–1662 (YGGH…VCKI). A disulfide bridge connects residues Cys-1489 and Cys-1503. 2 N-linked (GlcNAc...) asparagine glycosylation sites follow: Asn-1594 and Asn-1627. A disulfide bridge links Cys-1636 with Cys-1651. Residues 1668–1692 (YTGIAILFAVLCLLGLISLAIWFLL) traverse the membrane as a helical segment. The Cytoplasmic portion of the chain corresponds to 1693–1723 (QRSHIRWTGFSSVRYEHGTNEDEVMLPSFHD). 2 positions are modified to phosphoserine: Ser-1704 and Ser-1720.

N-glycosylated. As to expression, expressed in dendritic and thymic epithelial cells and lymph nodes.

It is found in the membrane. Functionally, acts as an endocytic receptor to direct captured antigens from the extracellular space to a specialized antigen-processing compartment. Causes reduced proliferation of B lymphocytes. This chain is Lymphocyte antigen 75 (Ly75), found in Mus musculus (Mouse).